We begin with the raw amino-acid sequence, 482 residues long: Chromosome stability protein 9 (482 aa).

2 disordered regions span residues 239–263 (SSLR…VNKN) and 418–482 (SGLA…RRIR). Over residues 240 to 249 (SLRNSSKNNN) the composition is skewed to low complexity. The span at 250-263 (GTVTPSTSGRVNKN) shows a compositional bias: polar residues. Over residues 418 to 437 (SGLAFSSSSNSLQQSKLPKS) the composition is skewed to low complexity. Polar residues-rich tracts occupy residues 440–453 (LKRS…TNTH) and 463–473 (RSSNTVLGSSK).

As to quaternary structure, component of the synapsis initiation complex composed of at least ZIP2, ZIP3, MSH4 and MSH5. Also interacts with ZIP1, MRE11, RAD51 and RAD53.

Its subcellular location is the nucleus. The protein localises to the chromosome. Functionally, component of the synapsis initiation complex (SIC) necessary for the synaptonemal complex assembly. Stabilizes the ZIP2 component to the chromosomes. The SIC complex loads onto chromosomes and nucleates ZIP1 polymerization, a molecular zipper that acts to bring homologous chromosomes in close apposition, which is required for meiotic crossover. May also be involved in double strand break repair. This chain is Chromosome stability protein 9 (CST9), found in Saccharomyces cerevisiae (strain ATCC 204508 / S288c) (Baker's yeast).